The following is a 256-amino-acid chain: Biosynthetic peptidoglycan transglycosylase (256 aa).

The helical transmembrane segment at 26–48 threads the bilayer; the sequence is VARWLAYAGGVFAGAWLATQLYY.

It belongs to the glycosyltransferase 51 family.

The protein resides in the cell inner membrane. It carries out the reaction [GlcNAc-(1-&gt;4)-Mur2Ac(oyl-L-Ala-gamma-D-Glu-L-Lys-D-Ala-D-Ala)](n)-di-trans,octa-cis-undecaprenyl diphosphate + beta-D-GlcNAc-(1-&gt;4)-Mur2Ac(oyl-L-Ala-gamma-D-Glu-L-Lys-D-Ala-D-Ala)-di-trans,octa-cis-undecaprenyl diphosphate = [GlcNAc-(1-&gt;4)-Mur2Ac(oyl-L-Ala-gamma-D-Glu-L-Lys-D-Ala-D-Ala)](n+1)-di-trans,octa-cis-undecaprenyl diphosphate + di-trans,octa-cis-undecaprenyl diphosphate + H(+). Its pathway is cell wall biogenesis; peptidoglycan biosynthesis. Functionally, peptidoglycan polymerase that catalyzes glycan chain elongation from lipid-linked precursors. The protein is Biosynthetic peptidoglycan transglycosylase of Burkholderia thailandensis (strain ATCC 700388 / DSM 13276 / CCUG 48851 / CIP 106301 / E264).